The primary structure comprises 310 residues: Proline iminopeptidase (310 aa).

Residues 33–290 enclose the AB hydrolase-1 domain; that stretch reads PVIFLHGGPG…RVVQAGHCAF (258 aa). The active-site Nucleophile is the Ser107. Asp260 is a catalytic residue. His287 (proton donor) is an active-site residue.

The protein belongs to the peptidase S33 family.

It localises to the cytoplasm. It catalyses the reaction Release of N-terminal proline from a peptide.. Functionally, hydrolyzes peptides having the structure Pro-Y-Z to yield free proline. Also hydrolyzes the dipeptide Pro-Gly. The protein is Proline iminopeptidase (pip) of Neisseria gonorrhoeae.